The primary structure comprises 147 residues: Ribonuclease 4 (147 aa).

A signal peptide spans Met1–Gly28. Gln29 is modified (pyrrolidone carboxylic acid). DUMP-binding residues include Arg35, His40, Lys68, Asn71, and Thr72. The active-site Proton acceptor is His40. 4 disulfide bridges follow: Cys53–Cys109, Cys67–Cys120, Cys85–Cys135, and Cys92–Cys99. Catalysis depends on His144, which acts as the Proton donor. Residue Phe145 participates in dUMP binding.

This sequence belongs to the pancreatic ribonuclease family.

Its subcellular location is the secreted. Functionally, cleaves preferentially after uridine bases. Has antimicrobial activity against uropathogenic E.coli (UPEC). Probably contributes to urinary tract sterility. The protein is Ribonuclease 4 (RNASE4) of Pongo abelii (Sumatran orangutan).